We begin with the raw amino-acid sequence, 161 residues long: Ubiquitin D (161 aa).

Ubiquitin-like domains lie at 3-77 (SCVC…LKVV) and 86-159 (LSLV…AHCI).

It belongs to the ubiquitin D family. In terms of assembly, interacts directly with the 26S proteasome. Interacts with NUB1; this interaction facilitates the linking of UBD-conjugated target protein to the proteasome complex and accelerates its own degradation and that of its conjugates. Interacts (via ubiquitin-like 1 domain) with the spindle checkpoint protein MAD2L1 during mitosis. Present in aggresomes of proteasome inhibited cells. Interacts with HDAC6 under proteasome impairment conditions. Forms a thioester with UBA6 in cells stimulated with tumor necrosis factor-alpha (TNFa) and interferon-gamma (IFNg). Interacts with SQSTM1 and TP53/p53. Post-translationally, can be acetylated.

The protein localises to the nucleus. It is found in the cytoplasm. Functionally, ubiquitin-like protein modifier which can be covalently attached to target proteins and subsequently leads to their degradation by the 26S proteasome, in a NUB1-dependent manner. Conjugation to the target protein is activated by UBA6 via adenylation of its C-terminal glycine. Probably functions as a survival factor. Promotes the expression of the proteasome subunit beta type-9 (PSMB9/LMP2). Regulates TNF-alpha-induced and LPS-mediated activation of the central mediator of innate immunity NF-kappa-B by promoting TNF-alpha-mediated proteasomal degradation of ubiquitinated-I-kappa-B-alpha. Required for TNF-alpha-induced p65 nuclear translocation in renal tubular epithelial cells (RTECs). May be involved in dendritic cell (DC) maturation, the process by which immature dendritic cells differentiate into fully competent antigen-presenting cells that initiate T-cell responses. Mediates mitotic non-disjunction and chromosome instability, in long-term in vitro culture and cancers, by abbreviating mitotic phase and impairing the kinetochore localization of MAD2L1 during the prometaphase stage of the cell cycle. May be involved in the formation of aggresomes when proteasome is saturated or impaired. Mediates apoptosis in a caspase-dependent manner, especially in renal epithelium and tubular cells during renal diseases. This Rattus norvegicus (Rat) protein is Ubiquitin D (Ubd).